A 360-amino-acid polypeptide reads, in one-letter code: Phenylalanine--tRNA ligase alpha subunit (360 aa).

Glutamate 260 provides a ligand contact to Mg(2+).

The protein belongs to the class-II aminoacyl-tRNA synthetase family. Phe-tRNA synthetase alpha subunit type 1 subfamily. In terms of assembly, tetramer of two alpha and two beta subunits. The cofactor is Mg(2+).

The protein resides in the cytoplasm. The catalysed reaction is tRNA(Phe) + L-phenylalanine + ATP = L-phenylalanyl-tRNA(Phe) + AMP + diphosphate + H(+). The chain is Phenylalanine--tRNA ligase alpha subunit from Beijerinckia indica subsp. indica (strain ATCC 9039 / DSM 1715 / NCIMB 8712).